Here is a 120-residue protein sequence, read N- to C-terminus: Large ribosomal subunit protein bL19 (120 aa).

The protein belongs to the bacterial ribosomal protein bL19 family.

This protein is located at the 30S-50S ribosomal subunit interface and may play a role in the structure and function of the aminoacyl-tRNA binding site. This is Large ribosomal subunit protein bL19 from Crocosphaera subtropica (strain ATCC 51142 / BH68) (Cyanothece sp. (strain ATCC 51142)).